The primary structure comprises 426 residues: Proline--tRNA ligase (426 aa).

It belongs to the class-II aminoacyl-tRNA synthetase family. ProS type 2 subfamily. As to quaternary structure, homodimer.

It is found in the cytoplasm. The catalysed reaction is tRNA(Pro) + L-proline + ATP = L-prolyl-tRNA(Pro) + AMP + diphosphate. Catalyzes the attachment of proline to tRNA(Pro) in a two-step reaction: proline is first activated by ATP to form Pro-AMP and then transferred to the acceptor end of tRNA(Pro). The polypeptide is Proline--tRNA ligase (Rickettsia rickettsii (strain Iowa)).